The primary structure comprises 332 residues: Mitotic spindle assembly checkpoint protein MAD2B (332 aa).

Residues 4 to 332 (EHFCDCIGEF…RTFTEQSITK (329 aa)) enclose the HORMA domain. Disordered stretches follow at residues 181–204 (KTQQSSSSSSSLKTSGGGDGNGFI) and 225–244 (KSNQKNKKEDNDDNNNGDKD). The segment covering 230–244 (NKKEDNDDNNNGDKD) has biased composition (basic and acidic residues).

This sequence belongs to the MAD2 family.

The protein resides in the nucleus. In terms of biological role, adapter protein able to interact with different proteins and involved in different biological processes. This is Mitotic spindle assembly checkpoint protein MAD2B (mad2l2) from Dictyostelium discoideum (Social amoeba).